Consider the following 350-residue polypeptide: Protein Wnt-8b (350 aa).

The first 21 residues, 1-21 (MFLMKPVCVLLVTCVLHRSHA), serve as a signal peptide directing secretion. Cysteines 53 and 64 form a disulfide. Asn-102 carries an N-linked (GlcNAc...) asparagine glycan. Disulfide bonds link Cys-103–Cys-111, Cys-113–Cys-131, Cys-179–Cys-193, Cys-181–Cys-188, Cys-255–Cys-293, Cys-271–Cys-286, Cys-290–Cys-332, Cys-308–Cys-323, Cys-310–Cys-320, and Cys-315–Cys-316. Residue Ser-185 is the site of O-palmitoleoyl serine attachment. The N-linked (GlcNAc...) asparagine glycan is linked to Asn-258.

It belongs to the Wnt family. In terms of processing, palmitoleoylation is required for efficient binding to frizzled receptors. Depalmitoleoylation leads to Wnt signaling pathway inhibition. Post-translationally, proteolytic processing by TIKI1 and TIKI2 promotes oxidation and formation of large disulfide-bond oligomers, leading to inactivation of WNT8B.

Its subcellular location is the secreted. The protein resides in the extracellular space. It is found in the extracellular matrix. Functionally, ligand for members of the frizzled family of seven transmembrane receptors. May play an important role in the development and differentiation of certain forebrain structures, notably the hippocampus. The polypeptide is Protein Wnt-8b (Wnt8b) (Mus musculus (Mouse)).